The chain runs to 87 residues: Small ribosomal subunit protein bS20 (87 aa).

A disordered region spans residues 1–20; sequence MANHKSAEKRARQTIKKTER.

This sequence belongs to the bacterial ribosomal protein bS20 family.

Binds directly to 16S ribosomal RNA. The protein is Small ribosomal subunit protein bS20 of Campylobacter jejuni subsp. jejuni serotype O:2 (strain ATCC 700819 / NCTC 11168).